The sequence spans 679 residues: UvrABC system protein B (679 aa).

In terms of domain architecture, Helicase ATP-binding spans 25–190 (EGVNQGQRYQ…SRNDFDITRG (166 aa)). 38 to 45 (GATGTGKT) contributes to the ATP binding site. The short motif at 91 to 114 (YYDYYQPEAYVPVSDTYIAKTASI) is the Beta-hairpin element. The Helicase C-terminal domain occupies 429 to 591 (QVDDLLAEIR…IVPRPAGKRA (163 aa)). The UVR domain occupies 639 to 674 (PELIDQLETKMKEAAKNLNFEEAASLRDRIKKFRQK).

Belongs to the UvrB family. As to quaternary structure, forms a heterotetramer with UvrA during the search for lesions. Interacts with UvrC in an incision complex.

The protein localises to the cytoplasm. In terms of biological role, the UvrABC repair system catalyzes the recognition and processing of DNA lesions. A damage recognition complex composed of 2 UvrA and 2 UvrB subunits scans DNA for abnormalities. Upon binding of the UvrA(2)B(2) complex to a putative damaged site, the DNA wraps around one UvrB monomer. DNA wrap is dependent on ATP binding by UvrB and probably causes local melting of the DNA helix, facilitating insertion of UvrB beta-hairpin between the DNA strands. Then UvrB probes one DNA strand for the presence of a lesion. If a lesion is found the UvrA subunits dissociate and the UvrB-DNA preincision complex is formed. This complex is subsequently bound by UvrC and the second UvrB is released. If no lesion is found, the DNA wraps around the other UvrB subunit that will check the other stand for damage. The chain is UvrABC system protein B from Prochlorococcus marinus (strain MIT 9303).